Here is a 1199-residue protein sequence, read N- to C-terminus: DNA-directed RNA polymerase subunit beta' (1199 aa).

The Zn(2+) site is built by C60, C62, C75, and C78. D449, D451, and D453 together coordinate Mg(2+). Zn(2+)-binding residues include C818, C892, C899, and C902.

Belongs to the RNA polymerase beta' chain family. The RNAP catalytic core consists of 2 alpha, 1 beta, 1 beta' and 1 omega subunit. When a sigma factor is associated with the core the holoenzyme is formed, which can initiate transcription. Mg(2+) serves as cofactor. Zn(2+) is required as a cofactor.

It catalyses the reaction RNA(n) + a ribonucleoside 5'-triphosphate = RNA(n+1) + diphosphate. Functionally, DNA-dependent RNA polymerase catalyzes the transcription of DNA into RNA using the four ribonucleoside triphosphates as substrates. The polypeptide is DNA-directed RNA polymerase subunit beta' (Bacillus pumilus (strain SAFR-032)).